The sequence spans 395 residues: Tyrosine--tRNA ligase 2 (395 aa).

The short motif at 42-51 (PTAPDIHLGH) is the 'HIGH' region element. The 'KMSKS' region signature appears at 226 to 230 (KMSKS). Lys-229 contacts ATP. Positions 334–394 (IAISNLLKEA…GKRKFARVTI (61 aa)) constitute an S4 RNA-binding domain.

This sequence belongs to the class-I aminoacyl-tRNA synthetase family. TyrS type 2 subfamily. In terms of assembly, homodimer.

The protein localises to the cytoplasm. It carries out the reaction tRNA(Tyr) + L-tyrosine + ATP = L-tyrosyl-tRNA(Tyr) + AMP + diphosphate + H(+). Catalyzes the attachment of tyrosine to tRNA(Tyr) in a two-step reaction: tyrosine is first activated by ATP to form Tyr-AMP and then transferred to the acceptor end of tRNA(Tyr). This chain is Tyrosine--tRNA ligase 2, found in Vibrio cholerae serotype O1 (strain ATCC 39315 / El Tor Inaba N16961).